Here is a 431-residue protein sequence, read N- to C-terminus: Histidine--tRNA ligase (431 aa).

This sequence belongs to the class-II aminoacyl-tRNA synthetase family. In terms of assembly, homodimer.

The protein localises to the cytoplasm. It carries out the reaction tRNA(His) + L-histidine + ATP = L-histidyl-tRNA(His) + AMP + diphosphate + H(+). The protein is Histidine--tRNA ligase of Limosilactobacillus fermentum (strain NBRC 3956 / LMG 18251) (Lactobacillus fermentum).